Here is a 391-residue protein sequence, read N- to C-terminus: Cyclin-A1 (391 aa).

It belongs to the cyclin family. Cyclin AB subfamily. As to quaternary structure, interacts with the CDK1 and the CDK2 protein kinases to form a serine/threonine kinase holoenzyme complex. The cyclin subunit imparts substrate specificity to the complex.

It localises to the nucleus. Functionally, may be involved in the control of the cell cycle at the G1/S (start) and G2/M (mitosis) transitions. The protein is Cyclin-A1 (ccna1) of Carassius auratus (Goldfish).